We begin with the raw amino-acid sequence, 1137 residues long: Protein sel-1 homolog 3 (1137 aa).

Residues 1 to 42 (MQWRGAGLWWPRRRQQQQQQQPPPPAFGPPAAAMVPPSRGVS) form a disordered region. 2 N-linked (GlcNAc...) asparagine glycosylation sites follow: asparagine 206 and asparagine 387. Sel1-like repeat units follow at residues 575 to 609 (HKAS…GQGS), 611 to 647 (RLSS…TKTP), 694 to 730 (AAAQ…LETE), 732 to 767 (PALI…SKGL), 768 to 800 (HQAV…EMGN), 801 to 839 (PDAS…QGGH), and 840 to 877 (IEGT…EKNG). Phosphoserine is present on serine 613. N-linked (GlcNAc...) asparagine glycosylation is present at asparagine 942. A Sel1-like 8 repeat occupies 952–988 (SFAYLKMGDLYYYGHQNQSQDLELSVQMYAQAALDGD). Residues 1067–1087 (LIYFLGTFLLSVVIAWMVLYL) traverse the membrane as a helical segment. The tract at residues 1100 to 1137 (AWVSADPTSSTPSPAVPPAADASDHDPPMMANGPEPRG) is disordered. The segment covering 1102–1120 (VSADPTSSTPSPAVPPAAD) has biased composition (low complexity).

Its subcellular location is the membrane. The polypeptide is Protein sel-1 homolog 3 (Sel1l3) (Mus musculus (Mouse)).